Here is a 424-residue protein sequence, read N- to C-terminus: Tyrosine--tRNA ligase (424 aa).

An L-tyrosine-binding site is contributed by Tyr37. Positions 42–51 match the 'HIGH' region motif; that stretch reads PTADSLHLGH. Lys144 carries the post-translational modification N6-acetyllysine. L-tyrosine-binding residues include Tyr175 and Gln179. A 'KMSKS' region motif is present at residues 235 to 239; the sequence is KFGKT. Lys238 serves as a coordination point for ATP. In terms of domain architecture, S4 RNA-binding spans 357-414; the sequence is ADLMQALVDSELQPSRGQARKTIASNAITINGEKQSDPEYFFKEEDRLFGRFTLLRRG.

This sequence belongs to the class-I aminoacyl-tRNA synthetase family. TyrS type 1 subfamily. In terms of assembly, homodimer.

It localises to the cytoplasm. It carries out the reaction tRNA(Tyr) + L-tyrosine + ATP = L-tyrosyl-tRNA(Tyr) + AMP + diphosphate + H(+). Catalyzes the attachment of tyrosine to tRNA(Tyr) in a two-step reaction: tyrosine is first activated by ATP to form Tyr-AMP and then transferred to the acceptor end of tRNA(Tyr). The chain is Tyrosine--tRNA ligase from Escherichia coli (strain K12 / DH10B).